A 126-amino-acid polypeptide reads, in one-letter code: Large ribosomal subunit protein bL19 (126 aa).

This sequence belongs to the bacterial ribosomal protein bL19 family.

Its function is as follows. This protein is located at the 30S-50S ribosomal subunit interface and may play a role in the structure and function of the aminoacyl-tRNA binding site. The chain is Large ribosomal subunit protein bL19 from Bordetella bronchiseptica (strain ATCC BAA-588 / NCTC 13252 / RB50) (Alcaligenes bronchisepticus).